A 174-amino-acid chain; its full sequence is Ribosome maturation factor RimM (174 aa).

The region spanning 98-171 (EGEFYFHEII…KIEIELMEGL (74 aa)) is the PRC barrel domain.

The protein belongs to the RimM family. In terms of assembly, binds ribosomal protein uS19.

The protein localises to the cytoplasm. An accessory protein needed during the final step in the assembly of 30S ribosomal subunit, possibly for assembly of the head region. Essential for efficient processing of 16S rRNA. May be needed both before and after RbfA during the maturation of 16S rRNA. It has affinity for free ribosomal 30S subunits but not for 70S ribosomes. This Bacillus subtilis (strain 168) protein is Ribosome maturation factor RimM.